We begin with the raw amino-acid sequence, 983 residues long: ABC transporter A family member 2 (983 aa).

6 helical membrane-spanning segments follow: residues 33–53 (FLQLFASFFFILLIFCIQAAM), 221–241 (IVALDTIGPTFFLAVAMFGFV), 279–299 (ILTAISALLTVLFGMMFQFDF), 305–325 (FPVVFLLFMLFQFNLIGLAFM), 339–359 (VGFFVFLVGFVTQLATSSGFP), and 416–436 (VLTINDIYLWLLGTFFLWFVL). The region spanning 518 to 763 (VQIRGLAKTY…FGTGFIANIS (246 aa)) is the ABC transporter domain. Residue 564-571 (GPNGAGKT) participates in ATP binding. A disordered region spans residues 963 to 983 (RSGSTSSRRFSRSGSSRRFSS).

Belongs to the ABC transporter superfamily. ABCA family. CPR flippase (TC 3.A.1.211) subfamily.

The protein localises to the membrane. This Arabidopsis thaliana (Mouse-ear cress) protein is ABC transporter A family member 2 (ABCA2).